The primary structure comprises 249 residues: Probable transcriptional regulatory protein CYA_2259 (249 aa).

Belongs to the TACO1 family.

The protein localises to the cytoplasm. The polypeptide is Probable transcriptional regulatory protein CYA_2259 (Synechococcus sp. (strain JA-3-3Ab) (Cyanobacteria bacterium Yellowstone A-Prime)).